The sequence spans 203 residues: Putative 3-methyladenine DNA glycosylase (203 aa).

The protein belongs to the DNA glycosylase MPG family.

This chain is Putative 3-methyladenine DNA glycosylase, found in Clostridium botulinum (strain Loch Maree / Type A3).